We begin with the raw amino-acid sequence, 316 residues long: Ribosomal RNA small subunit methyltransferase H (316 aa).

Residues 35–37, aspartate 55, phenylalanine 84, aspartate 105, and glutamine 112 contribute to the S-adenosyl-L-methionine site; that span reads AGH.

The protein belongs to the methyltransferase superfamily. RsmH family.

It localises to the cytoplasm. It carries out the reaction cytidine(1402) in 16S rRNA + S-adenosyl-L-methionine = N(4)-methylcytidine(1402) in 16S rRNA + S-adenosyl-L-homocysteine + H(+). Specifically methylates the N4 position of cytidine in position 1402 (C1402) of 16S rRNA. The chain is Ribosomal RNA small subunit methyltransferase H from Streptococcus thermophilus (strain ATCC BAA-250 / LMG 18311).